We begin with the raw amino-acid sequence, 163 residues long: Auxin-responsive protein IAA5 (163 aa).

Residues 15–19 (LRLGL) carry the EAR-like (transcriptional repression) motif. The 87-residue stretch at 74-160 (SSYVKVSVDG…KRLRIMKRSC (87 aa)) folds into the PB1 domain.

The protein belongs to the Aux/IAA family. As to quaternary structure, homodimers and heterodimers. Highly expressed in stems and flowers.

It localises to the nucleus. Its function is as follows. Aux/IAA proteins are short-lived transcriptional factors that function as repressors of early auxin response genes at low auxin concentrations. Repression is thought to result from the interaction with auxin response factors (ARFs), proteins that bind to the auxin-responsive promoter element (AuxRE). Formation of heterodimers with ARF proteins may alter their ability to modulate early auxin response genes expression. The protein is Auxin-responsive protein IAA5 (IAA5) of Arabidopsis thaliana (Mouse-ear cress).